Reading from the N-terminus, the 313-residue chain is Acetylglutamate kinase (313 aa).

Substrate-binding positions include glycine 84–glycine 85, arginine 106, and asparagine 210.

The protein belongs to the acetylglutamate kinase family. ArgB subfamily.

Its subcellular location is the cytoplasm. It catalyses the reaction N-acetyl-L-glutamate + ATP = N-acetyl-L-glutamyl 5-phosphate + ADP. The protein operates within amino-acid biosynthesis; L-arginine biosynthesis; N(2)-acetyl-L-ornithine from L-glutamate: step 2/4. Functionally, catalyzes the ATP-dependent phosphorylation of N-acetyl-L-glutamate. The sequence is that of Acetylglutamate kinase from Gluconacetobacter diazotrophicus (strain ATCC 49037 / DSM 5601 / CCUG 37298 / CIP 103539 / LMG 7603 / PAl5).